We begin with the raw amino-acid sequence, 284 residues long: L-ribulose-5-phosphate 3-epimerase UlaE (284 aa).

It belongs to the L-ribulose-5-phosphate 3-epimerase family.

It carries out the reaction L-ribulose 5-phosphate = L-xylulose 5-phosphate. It participates in cofactor degradation; L-ascorbate degradation; D-xylulose 5-phosphate from L-ascorbate: step 3/4. In terms of biological role, catalyzes the isomerization of L-xylulose-5-phosphate to L-ribulose-5-phosphate. Is involved in the anaerobic L-ascorbate utilization. This chain is L-ribulose-5-phosphate 3-epimerase UlaE, found in Escherichia coli (strain ATCC 8739 / DSM 1576 / NBRC 3972 / NCIMB 8545 / WDCM 00012 / Crooks).